A 295-amino-acid chain; its full sequence is Cyclin-G1 (295 aa).

Belongs to the cyclin family. Cyclin G subfamily. High levels in skeletal muscle, ovary, kidney and colon.

It is found in the nucleus. Its function is as follows. May play a role in growth regulation. Is associated with G2/M phase arrest in response to DNA damage. May be an intermediate by which p53 mediates its role as an inhibitor of cellular proliferation. This chain is Cyclin-G1 (CCNG1), found in Homo sapiens (Human).